Here is a 162-residue protein sequence, read N- to C-terminus: Protein A49 (162 aa).

This sequence belongs to the poxviridae A49 protein family.

In Variola virus (isolate Human/India/Ind3/1967) (VARV), this protein is Protein A49.